The sequence spans 462 residues: GTPase Der (462 aa).

2 consecutive EngA-type G domains span residues 2–164 (QKVI…EEKV) and 198–369 (IRVG…KNYT). GTP is bound by residues 8 to 15 (GKPNVGKS), 55 to 59 (DSGGL), 116 to 119 (NKID), 204 to 211 (GRVNVGKS), 251 to 255 (DTAGI), and 315 to 318 (NKWD). The KH-like domain maps to 370–454 (QKIQTSKLNE…PIVLIPKKRG (85 aa)).

The protein belongs to the TRAFAC class TrmE-Era-EngA-EngB-Septin-like GTPase superfamily. EngA (Der) GTPase family. In terms of assembly, associates with the 50S ribosomal subunit.

GTPase that plays an essential role in the late steps of ribosome biogenesis. The polypeptide is GTPase Der (Campylobacter concisus (strain 13826)).